We begin with the raw amino-acid sequence, 608 residues long: Chaperone protein DnaK (608 aa).

Thr-174 bears the Phosphothreonine; by autocatalysis mark. Positions 493 to 505 are enriched in basic and acidic residues; it reads YEEEDRKRKESAE. Disordered stretches follow at residues 493–514 and 577–608; these read YEEE…DSMV and GQAA…DDDK. Residues 577 to 590 are compositionally biased toward low complexity; it reads GQAAGANPGAQTTG. Positions 599–608 are enriched in basic and acidic residues; the sequence is AEYKVVDDDK.

This sequence belongs to the heat shock protein 70 family.

Its function is as follows. Acts as a chaperone. This Acetivibrio thermocellus (strain ATCC 27405 / DSM 1237 / JCM 9322 / NBRC 103400 / NCIMB 10682 / NRRL B-4536 / VPI 7372) (Clostridium thermocellum) protein is Chaperone protein DnaK.